A 214-amino-acid polypeptide reads, in one-letter code: Osteoclast-stimulating factor 1 (214 aa).

At S2 the chain carries N-acetylserine. Positions 12–71 (GQVKVFRALYTFEPRTPDELYFEEGDIIYITDMSDTSWWKGTCKGRTGLIPSNYVAEQAE) constitute an SH3 domain. 3 ANK repeats span residues 72–101 (SIDN…GVNG), 105–135 (AGST…ELNQ), and 139–168 (LGDT…RTDL). Residue T200 is modified to Phosphothreonine. Phosphoserine occurs at positions 202 and 213.

Interacts with SRC and SMN1. Interacts with FASLG.

The protein resides in the cytoplasm. Induces bone resorption, acting probably through a signaling cascade which results in the secretion of factor(s) enhancing osteoclast formation and activity. This chain is Osteoclast-stimulating factor 1 (Ostf1), found in Rattus norvegicus (Rat).